The following is a 336-amino-acid chain: Cytoplasmic envelopment protein 2 (336 aa).

The interaction with host BBLF1 stretch occupies residues 67-69 (KKK).

This sequence belongs to the herpesviridae cytoplasmic envelopment protein 2 family. As to quaternary structure, homodimer. Interacts with BBLF1. Interacts with the capsid. Interacts with BKRF4 (via C-terminus); this interaction is important for infectious virion production. Interacts with host TYK2; this interaction participates to the inhibition of host type I IFN signaling. Interacts with host STAT1; this interaction leads to STAT1 dephosphorylation and inhibition. Interacts with host STAT2; this interaction leads to STAT2 degradation. Interacts with host CUL1; this interaction might facilitate CUL1 recruitment to STAT2, leading to ubiquitination and degradation of the latter. Interacts with host AGO2; this interaction participates to the host miRNA regulation leading to enhanced SUMOylation.

It is found in the virion tegument. Its subcellular location is the host cytoplasm. The protein resides in the host nucleus. The protein localises to the host Golgi apparatus. It localises to the host trans-Golgi network. Functionally, plays a critical role in cytoplasmic virus egress. Participates in the final step of tegumentation and envelope acquisition within the host cytoplasm by directly interacting with the capsid. Upon virion binding to target cell, a signaling cascade is triggered to disrupt the interaction with the capsid, thereby preparing capsid uncoating. Activates the AP-1 pathway and enhances EBV reactivation and virus release. Inhibits type I IFN-induced TYK2, STAT1 and STAT3 phosphorylation, thereby impairing type I IFN signaling and counteracting the ability of IFN-alpha to suppress the reactivation of EBV. Recruits SHP1 phosphatase to dephosphorylate STAT1. Mediates STAT2 ubiquitination and proteasomal degradation. Also suppresses type II and type III IFN signaling. Contributes to G1/S arrest in the host cell. Acts as an miRNA regulator that interferes with the function of RISC in miRNA-mediated mRNA silencing. As a result, SUMOylation is increased. When encapsulated in the exosomes released by EBV-infected host cells, may facilitate the infection in recipient cells. The polypeptide is Cytoplasmic envelopment protein 2 (Epstein-Barr virus (strain AG876) (HHV-4)).